A 196-amino-acid chain; its full sequence is Small ribosomal subunit protein uS4m (196 aa).

Residues 88 to 154 (KRLDVILVRL…FKSNIRKNFQ (67 aa)) form the S4 RNA-binding domain.

It belongs to the universal ribosomal protein uS4 family.

It localises to the mitochondrion. The sequence is that of Small ribosomal subunit protein uS4m (RPS4) from Marchantia polymorpha (Common liverwort).